A 526-amino-acid polypeptide reads, in one-letter code: MFDSNHEQELSKRRTFAIISHPDAGKTTITEKMLFFGKVIRVPGTIKGRGSGKYAKSDWMNIEKERGISITTSVMQFTYKNILMNLLDTPGHQDFSEDTYRILTAVDCCLVVIDAAKGIEERTRKLMDVARIHNTPIITFINKLDRDSRDPIEILDEIEKELKLHCIPISWPISCGKNFQGVYHIYDKIIHLYKSKFRKNFLTLDSFLDGSLNEYLGADLSIHIRQELELIMNVYSKFNKEKFLKGITTPIFFGSALGNFGIDHLLDSLIKWAPSPLYRQSNKRIIKPQERKFTGFIFKIQANMDLKHRDRIAFMRIVSGQYTKGMKLTHVRIKKNIIISDAFSFLAGERISINKAYPGDVIGLHNHGTIKIGDTFTQGEEIKFIGIPSFAPEIFRLIYLKNPLKQKQLKKGLVQLSEEGTVQVFRPILNNDLILGAIGILQFDVVIERLRIEYNIDAVYKKVNIVLARWINCGNHHSLYNLKKSYSSYLAYDISNSLIYLAPSSANLNIVMSQNSDISFNATREQ.

In terms of domain architecture, tr-type G spans 11–277 (SKRRTFAIIS…SLIKWAPSPL (267 aa)). GTP contacts are provided by residues 20 to 27 (SHPDAGKT), 88 to 92 (DTPGH), and 142 to 145 (NKLD).

The protein belongs to the TRAFAC class translation factor GTPase superfamily. Classic translation factor GTPase family. PrfC subfamily.

It is found in the cytoplasm. Functionally, increases the formation of ribosomal termination complexes and stimulates activities of RF-1 and RF-2. It binds guanine nucleotides and has strong preference for UGA stop codons. It may interact directly with the ribosome. The stimulation of RF-1 and RF-2 is significantly reduced by GTP and GDP, but not by GMP. The sequence is that of Peptide chain release factor 3 from Buchnera aphidicola subsp. Acyrthosiphon pisum (strain 5A).